The following is a 523-amino-acid chain: Probable endopeptidase p60 (523 aa).

An N-terminal signal peptide occupies residues 1–27 (MNMKKATIAATAGIAVTAFAAPTIASA). Residues 28–71 (STVVVEAGDTLWGIAQDNGTTVDALKKANKLTTDKIVPGQKLQV) form the LysM 1 domain. The SH3b domain maps to 78–142 (KTEKSVSATW…VNGKYLGNAV (65 aa)). Positions 146 to 188 (PSATPEVKQEETTQAAPAQQTKTEVKQATPAATTEKDAVETKT) are disordered. Over residues 157-167 (TTQAAPAQQTK) the composition is skewed to low complexity. Residues 198–241 (TTHTVKSGDTIWALSVKYGASVQDLMSWNNLSSSSIYVGQNIAV) enclose the LysM 2 domain. Composition is skewed to low complexity over residues 251–282 (PKAEAKTEAPAAEKQTAAPVVKESTNTSTTTT) and 290–318 (EKQTSTTKAPAQAAKPAPAPAPTVNTNAS). 2 disordered regions span residues 251 to 323 (PKAE…YTVK) and 367 to 408 (ATNT…SSSA). Residues 318–361 (SSYTVKSGDTLGKIASTFGTTVSKIKALNGLTSDNLQVGDVLKV) form the LysM 3 domain. A NlpC/P60 domain is found at 405-523 (SSSASAIIAE…GQYLVGFGRV (119 aa)). Cys435 (nucleophile) is an active-site residue. Residue His485 is the Proton acceptor of the active site. Asn497 is an active-site residue.

Belongs to the peptidase C40 family.

Functionally, this major extracellular protein may be involved in the invasion of non-professional phagocytic cells by Listeria. The sequence is that of Probable endopeptidase p60 (iap) from Listeria seeligeri.